The primary structure comprises 218 residues: NAD(P)H-quinone oxidoreductase subunit I (218 aa).

4Fe-4S ferredoxin-type domains are found at residues 55–84 (GRIH…VDWV) and 95–124 (RNYS…MTEE). [4Fe-4S] cluster contacts are provided by C64, C67, C70, C74, C104, C107, C110, and C114. The tract at residues 169-218 (MDPHDVPANQPRAGQLPAEALKSLSLQQESVQGDEGESLQDASDQDQPSG) is disordered. Polar residues predominate over residues 208-218 (QDASDQDQPSG).

It belongs to the complex I 23 kDa subunit family. NDH-1 is composed of at least 11 different subunits. [4Fe-4S] cluster is required as a cofactor.

The protein resides in the cellular thylakoid membrane. The catalysed reaction is a plastoquinone + NADH + (n+1) H(+)(in) = a plastoquinol + NAD(+) + n H(+)(out). It catalyses the reaction a plastoquinone + NADPH + (n+1) H(+)(in) = a plastoquinol + NADP(+) + n H(+)(out). In terms of biological role, NDH-1 shuttles electrons from an unknown electron donor, via FMN and iron-sulfur (Fe-S) centers, to quinones in the respiratory and/or the photosynthetic chain. The immediate electron acceptor for the enzyme in this species is believed to be plastoquinone. Couples the redox reaction to proton translocation, and thus conserves the redox energy in a proton gradient. In Prochlorococcus marinus (strain MIT 9313), this protein is NAD(P)H-quinone oxidoreductase subunit I.